Consider the following 329-residue polypeptide: Sex comb on midleg-like protein 1 (329 aa).

S138 and S238 each carry phosphoserine. Positions 138–157 (SPTLPVSRRENNSPSNLPRP) are disordered. The region spanning 258 to 325 (WSVEAVVLFL…YYIDRLKQGK (68 aa)) is the SAM domain.

It belongs to the SCM family.

The protein localises to the nucleus. In terms of biological role, putative Polycomb group (PcG) protein. PcG proteins act by forming multiprotein complexes, which are required to maintain the transcriptionally repressive state of homeotic genes throughout development. May be involved in spermatogenesis during sexual maturation. The sequence is that of Sex comb on midleg-like protein 1 (SCML1) from Gorilla gorilla gorilla (Western lowland gorilla).